The sequence spans 233 residues: Phycoerythrobilin synthase (233 aa).

The protein belongs to the HY2 family.

It catalyses the reaction (3Z)-phycoerythrobilin + 2 oxidized 2[4Fe-4S]-[ferredoxin] = biliverdin IXalpha + 2 reduced 2[4Fe-4S]-[ferredoxin] + 4 H(+). Plays a role in phycoerythrobilin biosynthesis, the red pigment chromophore photosynthetically active biliproteins of the host cyanobacteria. Uses a four-electron reduction to carry out the reactions catalyzed by two enzymes (EC 1.3.7.2 and EC 1.3.7.3) in host. The chain is Phycoerythrobilin synthase (pebS) from Prochlorococcus.